The sequence spans 93 residues: Large ribosomal subunit protein bL27 (93 aa).

Residues 1-22 form a disordered region; that stretch reads MAHKKAGGSSRNGRDSAGRRLG.

It belongs to the bacterial ribosomal protein bL27 family.

In Parvibaculum lavamentivorans (strain DS-1 / DSM 13023 / NCIMB 13966), this protein is Large ribosomal subunit protein bL27.